The following is a 292-amino-acid chain: Acetylglutamate kinase (292 aa).

Substrate is bound by residues 64 to 65 (GG), Arg-86, and Asn-190.

It belongs to the acetylglutamate kinase family. ArgB subfamily.

The protein localises to the cytoplasm. The catalysed reaction is N-acetyl-L-glutamate + ATP = N-acetyl-L-glutamyl 5-phosphate + ADP. It functions in the pathway amino-acid biosynthesis; L-arginine biosynthesis; N(2)-acetyl-L-ornithine from L-glutamate: step 2/4. Functionally, catalyzes the ATP-dependent phosphorylation of N-acetyl-L-glutamate. This is Acetylglutamate kinase from Geotalea daltonii (strain DSM 22248 / JCM 15807 / FRC-32) (Geobacter daltonii).